Consider the following 805-residue polypeptide: Mitochondrial intermediate peptidase (805 aa).

Residues 1–25 (MIQPLVKASRPRLWVCSDCLLRRTL) constitute a mitochondrion transit peptide. Residue His578 participates in Zn(2+) binding. Glu579 is a catalytic residue. Zn(2+) is bound by residues His582 and His585.

Belongs to the peptidase M3 family. Zn(2+) is required as a cofactor.

The protein localises to the mitochondrion matrix. The enzyme catalyses Release of an N-terminal octapeptide as second stage of processing of some proteins imported into the mitochondrion.. Cleaves proteins, imported into the mitochondrion, to their mature size. While most mitochondrial precursor proteins are processed to the mature form in one step by mitochondrial processing peptidase (MPP), the sequential cleavage by MIP of an octapeptide after initial processing by MPP is a required step for a subgroup of nuclear-encoded precursor proteins destined for the matrix or the inner membrane. The sequence is that of Mitochondrial intermediate peptidase (oct-1) from Neurospora crassa (strain ATCC 24698 / 74-OR23-1A / CBS 708.71 / DSM 1257 / FGSC 987).